Here is a 523-residue protein sequence, read N- to C-terminus: DNA-directed primase/polymerase protein (523 aa).

Substrate contacts are provided by residues Arg-78, 117-119 (DLE), and 168-172 (KFSHH). 2 residues coordinate Mn(2+): Asp-117 and Glu-119. The tract at residues 203–230 (LKKSNPEAPGENRDDVEGTQAKRRKTEE) is disordered. Substrate contacts are provided by residues 258–261 (RNFR) and Lys-267. The Zn(2+) site is built by Cys-390, His-397, Cys-417, and Cys-422. Residues 390 to 423 (CHNVKRFHKSNNIIIVVDLKEEVWYQKCHDPECR) carry the Zinc knuckle motif motif. The span at 467 to 477 (APAESTSTTPS) shows a compositional bias: low complexity. Residues 467 to 523 (APAESTSTTPSEDTEGWGDWPDDPAYLRALQEVEEEEEDEDEEVPDELLLQAVNECE) are disordered. 2 stretches are compositionally biased toward acidic residues: residues 478–488 (EDTEGWGDWPD) and 498–512 (EVEE…EVPD).

It belongs to the eukaryotic-type primase small subunit family. The cofactor is Mn(2+).

The protein localises to the nucleus. It is found in the mitochondrion matrix. It localises to the chromosome. The catalysed reaction is ssDNA + n NTP = ssDNA/pppN(pN)n-1 hybrid + (n-1) diphosphate.. It catalyses the reaction DNA(n) + a 2'-deoxyribonucleoside 5'-triphosphate = DNA(n+1) + diphosphate. DNA primase and DNA polymerase required to tolerate replication-stalling lesions by bypassing them. Required to facilitate mitochondrial and nuclear replication fork progression by initiating de novo DNA synthesis using dNTPs and acting as an error-prone DNA polymerase able to bypass certain DNA lesions. Shows a high capacity to tolerate DNA damage lesions such as 8oxoG and abasic sites in DNA. Provides different translesion synthesis alternatives when DNA replication is stalled: able to synthesize DNA primers downstream of lesions, such as UV lesions, R-loops and G-quadruplexes, to allow DNA replication to continue. Can also realign primers ahead of 'unreadable lesions' such as abasic sites and 6-4 photoproduct (6-4 pyrimidine-pyrimidinone), thereby skipping the lesion. Repriming avoids fork degradation while leading to accumulation of internal ssDNA gaps behind the forks. Also able to incorporate nucleotides opposite DNA lesions such as 8oxoG, like a regular translesion synthesis DNA polymerase. Also required for reinitiating stalled forks after ultraviolet (UV) damage during nuclear DNA replication. Required for mitochondrial DNA (mtDNA) synthesis and replication, by reinitiating synthesis after UV damage or in the presence of chain-terminating nucleotides. In addition to its role in DNA damage response, also required to maintain efficient nuclear and mitochondrial DNA replication in unperturbed cells. This chain is DNA-directed primase/polymerase protein, found in Danio rerio (Zebrafish).